The primary structure comprises 1425 residues: B-cell CLL/lymphoma 9 protein (1425 aa).

A disordered region spans residues 1–172 (MHPSNPKVRS…APEPISAQKT (172 aa)). Polar residues-rich tracts occupy residues 7 to 21 (KVRS…SSPK) and 34 to 48 (MSPS…KFSN). The segment covering 54–63 (GSASQSQPSP) has biased composition (low complexity). Over residues 78 to 94 (GPGGSMGLKNGAGNGAK) the composition is skewed to gly residues. 2 stretches are compositionally biased toward basic and acidic residues: residues 100–112 (ERSI…DQRD) and 120–135 (SDIK…KSQE). Ser-104 carries the phosphoserine modification. Over residues 144 to 157 (TPSTATAPRSSTPS) the composition is skewed to low complexity. Ser-157 is subject to Phosphoserine. The residue at position 172 (Thr-172) is a Phosphothreonine. Residues 177–205 (VYVFSTEMANKAAEAVLKGQVETIVSFHI) form an interaction with PYGO1 region. Residues 207–226 (NISNSKSERSTAPLNTQIPT) show a composition bias toward polar residues. Disordered regions lie at residues 207-441 (NISN…VPFS) and 577-624 (VPNP…PNPQ). Pro residues-rich tracts occupy residues 232 to 241 (KPLPQQPPAP) and 256 to 270 (PTPP…PTAA). The segment covering 304-320 (GPNSTPNNRAVTPVSQG) has biased composition (polar residues). At Thr-315 the chain carries Phosphothreonine. A phosphoserine mark is found at Ser-318 and Ser-352. Basic and acidic residues predominate over residues 355–380 (QLEHRERSLQTLRDIQRMLFPDEKEF). The segment at 358 to 374 (HRERSLQTLRDIQRMLF) is interaction with CTNNB1. 2 positions are modified to phosphoserine: Ser-686 and Ser-688. 4 disordered regions span residues 781–1003 (RPFL…LSQN), 1031–1051 (VASS…SMNS), 1153–1199 (PHNG…GPGA), and 1252–1275 (PRGE…MQGM). Asymmetric dimethylarginine is present on Arg-800. Over residues 822 to 835 (NPSSNPTSLSTAPP) the composition is skewed to low complexity. Lys-843 bears the N6-acetyllysine mark. Residues 866–890 (TMHQVQSPMLGSPSGNLKSPQTPSQ) show a composition bias toward polar residues. Over residues 891 to 902 (LAGMLAGPAAAA) the composition is skewed to low complexity. A phosphoserine mark is found at Ser-906 and Ser-916. Residues 936–946 (PKPPLQSPGIP) are compositionally biased toward pro residues. Gly residues predominate over residues 1157–1175 (PTGGQGNFPGGIGFPGEGP).

Belongs to the BCL9 family. As to quaternary structure, binds to beta-catenin (CTNNB1), PYGO1 and PYGO2; the interaction with PYGO1 increases PYGO1 affinity to histone H3 methylated at 'Lys 4'.

It is found in the nucleus. Promotes beta-catenin's transcriptional activity. Involved in signal transduction through the Wnt pathway. The protein is B-cell CLL/lymphoma 9 protein (Bcl9) of Mus musculus (Mouse).